Reading from the N-terminus, the 331-residue chain is Major ferric iron-binding protein (331 aa).

An N-terminal signal peptide occupies residues 1–22; sequence MKTSIRYALLAAALTAATPALA. Residues His31, Glu79, Tyr217, and Tyr218 each coordinate Fe cation.

The protein belongs to the bacterial solute-binding protein 1 family.

The protein resides in the periplasm. Functionally, this protein may be a central component in the iron-acquisition system. This chain is Major ferric iron-binding protein (fbpA), found in Neisseria meningitidis serogroup B (strain ATCC BAA-335 / MC58).